Consider the following 180-residue polypeptide: MALAEDLALLVRQEEVLQFKHFDEDVAWQLGALLQRRAEAEGWLVVIDIRRFERPLFLAARPGVTPHNHDWIRRKCNTVQRFLCSSYRIGHQLAIDQKDLTQRYNLSPVDYASAGGGFPITVQGAGVIGSVAVSGLPERQDHQAIIDALCTLLGHDRAALSLAPVGKFANAKGKVVAVSG.

This sequence belongs to the UPF0303 family.

This chain is UPF0303 protein PSEEN3311, found in Pseudomonas entomophila (strain L48).